The chain runs to 156 residues: Ribonuclease P protein component (156 aa).

The disordered stretch occupies residues 126-156; the sequence is GLRKLGVTPGGGRSPAPRAHSGARPRTDARS.

This sequence belongs to the RnpA family. In terms of assembly, consists of a catalytic RNA component (M1 or rnpB) and a protein subunit.

The catalysed reaction is Endonucleolytic cleavage of RNA, removing 5'-extranucleotides from tRNA precursor.. Its function is as follows. RNaseP catalyzes the removal of the 5'-leader sequence from pre-tRNA to produce the mature 5'-terminus. It can also cleave other RNA substrates such as 4.5S RNA. The protein component plays an auxiliary but essential role in vivo by binding to the 5'-leader sequence and broadening the substrate specificity of the ribozyme. This chain is Ribonuclease P protein component, found in Nocardia farcinica (strain IFM 10152).